A 200-amino-acid chain; its full sequence is MLKIYVVDNGGQWTHREWRVLRELGVDTKIVPNDIDSSELDGLDGLVLSGGAPNIDEELDKLGSVGKYIDDHNYPILGICVGAQFIALHFGASVVKAKHPEFGKTKVSVMHSENIFGGLPSEITVWENHNDEIINLPDDFTLAASSATCQVQGFYHKTRPIYATQFHPEVEHTQYGRDIFRNFIGICASYREIQKENFQH.

The Glutamine amidotransferase type-1 domain occupies 3–193; sequence KIYVVDNGGQ…IGICASYREI (191 aa). Residue C80 is the Nucleophile of the active site. Residues H167 and E169 contribute to the active site.

Heterodimer composed of a glutamine amidotransferase subunit (A) and a GMP-binding subunit (B).

The catalysed reaction is XMP + L-glutamine + ATP + H2O = GMP + L-glutamate + AMP + diphosphate + 2 H(+). The protein operates within purine metabolism; GMP biosynthesis; GMP from XMP (L-Gln route): step 1/1. In terms of biological role, catalyzes the synthesis of GMP from XMP. In Thermoplasma acidophilum (strain ATCC 25905 / DSM 1728 / JCM 9062 / NBRC 15155 / AMRC-C165), this protein is GMP synthase [glutamine-hydrolyzing] subunit A.